The following is a 401-amino-acid chain: Homocysteine-responsive endoplasmic reticulum-resident ubiquitin-like domain member 2 protein (401 aa).

The Ubiquitin-like domain maps to 10–89; the sequence is VTLIIKAPNQ…HMVHLVCASR (80 aa). Positions 87 to 137 are disordered; that stretch reads ASRSPPSSPKSSTDGESHGALASSTNSNSDHSDSTTPSPSQESLSLVAGSS. 2 stretches are compositionally biased toward low complexity: residues 88-98 and 109-126; these read SRSPPSSPKSS and SSTN…PSPS. The helical transmembrane segment at 299–319 threads the bilayer; it reads FIMVMGAMLLVYLHQAGWFPF.

Its subcellular location is the membrane. Functionally, could be involved in the unfolded protein response (UPR) pathway. This chain is Homocysteine-responsive endoplasmic reticulum-resident ubiquitin-like domain member 2 protein (Herpud2), found in Rattus norvegicus (Rat).